We begin with the raw amino-acid sequence, 379 residues long: tRNA-specific 2-thiouridylase MnmA (379 aa).

Residues 6–13 (AMSGGVDS) and Leu32 each bind ATP. Cys101 functions as the Nucleophile in the catalytic mechanism. An intrachain disulfide couples Cys101 to Cys199. Residue Gly125 participates in ATP binding. Residues 148-150 (KDQ) are interaction with tRNA. The active-site Cysteine persulfide intermediate is the Cys199.

The protein belongs to the MnmA/TRMU family.

It localises to the cytoplasm. The catalysed reaction is S-sulfanyl-L-cysteinyl-[protein] + uridine(34) in tRNA + AH2 + ATP = 2-thiouridine(34) in tRNA + L-cysteinyl-[protein] + A + AMP + diphosphate + H(+). Its function is as follows. Catalyzes the 2-thiolation of uridine at the wobble position (U34) of tRNA, leading to the formation of s(2)U34. This chain is tRNA-specific 2-thiouridylase MnmA, found in Arthrobacter sp. (strain FB24).